Here is a 184-residue protein sequence, read N- to C-terminus: ATP synthase subunit b, chloroplastic (184 aa).

The helical transmembrane segment at 27-49 (LATNPINLSVVFGVLIFFGKGVL) threads the bilayer.

The protein belongs to the ATPase B chain family. In terms of assembly, F-type ATPases have 2 components, F(1) - the catalytic core - and F(0) - the membrane proton channel. F(1) has five subunits: alpha(3), beta(3), gamma(1), delta(1), epsilon(1). F(0) has four main subunits: a(1), b(1), b'(1) and c(10-14). The alpha and beta chains form an alternating ring which encloses part of the gamma chain. F(1) is attached to F(0) by a central stalk formed by the gamma and epsilon chains, while a peripheral stalk is formed by the delta, b and b' chains.

It is found in the plastid. The protein resides in the chloroplast thylakoid membrane. In terms of biological role, f(1)F(0) ATP synthase produces ATP from ADP in the presence of a proton or sodium gradient. F-type ATPases consist of two structural domains, F(1) containing the extramembraneous catalytic core and F(0) containing the membrane proton channel, linked together by a central stalk and a peripheral stalk. During catalysis, ATP synthesis in the catalytic domain of F(1) is coupled via a rotary mechanism of the central stalk subunits to proton translocation. Functionally, component of the F(0) channel, it forms part of the peripheral stalk, linking F(1) to F(0). This Barbarea verna (Land cress) protein is ATP synthase subunit b, chloroplastic.